The primary structure comprises 99 residues: Antitoxin VapB47 (99 aa).

The protein belongs to the phD/YefM antitoxin family.

Its function is as follows. Antitoxin component of a type II toxin-antitoxin (TA) system. In Mycobacterium tuberculosis (strain CDC 1551 / Oshkosh), this protein is Antitoxin VapB47 (vapB47).